We begin with the raw amino-acid sequence, 493 residues long: D-glyceraldehyde dehydrogenase (NADP(+)) (493 aa).

The stretch at 70–92 (RAKELIEKNRAELENIIMEENGK) forms a coiled coil. NADP(+) contacts are provided by residues 146–149 (TPWN), Arg157, 172–176 (KPSSD), 204–210 (RGSEIGD), 225–248 (GSTATGQRIMQKASANMAKLILEL), Cys281, and 381–383 (EIF). Residues Asn149 and Arg157 each contribute to the substrate site. Glu247 serves as the catalytic Proton acceptor. Cys281 is a binding site for substrate. Cys281 functions as the Proton donor in the catalytic mechanism.

This sequence belongs to the aldehyde dehydrogenase family. Glyceraldehyde dehydrogenase subfamily. Homotetramer. Dimer of dimers.

It catalyses the reaction D-glyceraldehyde + NADP(+) + H2O = (R)-glycerate + NADPH + 2 H(+). It participates in carbohydrate degradation; glycolysis. With respect to regulation, inhibited by calcium, cadmium, copper and mercury ions. Stable for 2 hours at 60 degrees Celsius but activity is decreased to less than 50 percent within 20 minutes at 80 degrees Celsius. Two folds activity enhancement in the presence of 1 mM glutathione, DTT, or 2-mercaptoethanol. Complete activity inhibition by thiol-modifying reagents such as p-chloromercuribenzoic acid or p-hydroxy-mercuribenzoic acid. In terms of biological role, NADP-dependent dehydrogenase of the nED (non-phosphorylated Entner-Doudoroff) pathway with highest activity towards glyceraldehydes (e.g. D,L-glyceraldehyde and D-glyceraldehyde), to a lesser extent towards D,L-glyceraldehyde-3-phosphate and glycolaldehyde, but no activity towards aliphatic or aromatic aldehydes. This Thermoplasma acidophilum (strain ATCC 25905 / DSM 1728 / JCM 9062 / NBRC 15155 / AMRC-C165) protein is D-glyceraldehyde dehydrogenase (NADP(+)).